A 761-amino-acid chain; its full sequence is BMP/retinoic acid-inducible neural-specific protein 1 (761 aa).

Positions 1 to 22 (MNWRLVEFLYLLFIWDHILVQP) are cleaved as a signal peptide. Positions 68-251 (RYKIYREFAR…FVQSALSYIM (184 aa)) constitute an MACPF domain. Residues Asn-156, Asn-433, Asn-443, Asn-553, Asn-599, Asn-631, and Asn-677 are each glycosylated (N-linked (GlcNAc...) asparagine).

It belongs to the BRINP family.

It is found in the cytoplasm. In terms of biological role, plays a role in neurogenesis and brain development. May suppress cell cycle progression in postmitotic neurons by inhibiting G1/S transition. This Gallus gallus (Chicken) protein is BMP/retinoic acid-inducible neural-specific protein 1 (BRINP1).